Reading from the N-terminus, the 175-residue chain is Large ribosomal subunit protein uL10 (175 aa).

This sequence belongs to the universal ribosomal protein uL10 family. As to quaternary structure, part of the ribosomal stalk of the 50S ribosomal subunit. The N-terminus interacts with L11 and the large rRNA to form the base of the stalk. The C-terminus forms an elongated spine to which L12 dimers bind in a sequential fashion forming a multimeric L10(L12)X complex.

Functionally, forms part of the ribosomal stalk, playing a central role in the interaction of the ribosome with GTP-bound translation factors. In Prochlorococcus marinus (strain MIT 9515), this protein is Large ribosomal subunit protein uL10.